A 129-amino-acid polypeptide reads, in one-letter code: D-ribose pyranase 2 (129 aa).

Catalysis depends on histidine 20, which acts as the Proton donor. Substrate-binding positions include aspartate 28, histidine 96, and 118–120 (YAN).

This sequence belongs to the RbsD / FucU family. RbsD subfamily. In terms of assembly, homodecamer.

The protein localises to the cytoplasm. It catalyses the reaction beta-D-ribopyranose = beta-D-ribofuranose. The protein operates within carbohydrate metabolism; D-ribose degradation; D-ribose 5-phosphate from beta-D-ribopyranose: step 1/2. Its function is as follows. Catalyzes the interconversion of beta-pyran and beta-furan forms of D-ribose. The protein is D-ribose pyranase 2 of Streptomyces griseus subsp. griseus (strain JCM 4626 / CBS 651.72 / NBRC 13350 / KCC S-0626 / ISP 5235).